Consider the following 559-residue polypeptide: Myb/SANT-like DNA-binding domain-containing protein 2 (559 aa).

Positions 1–62 (MAAPCGSELP…GSAAGSGAAA (62 aa)) are disordered. Phosphoserine occurs at positions 13, 24, 27, 32, and 48. The segment covering 46-61 (GASPLGPGSAAGSGAA) has biased composition (low complexity). Residues 103-173 (SWTPAETNAL…QCRERIKTLR (71 aa)) form the Myb-like domain. Residues lysine 268 and lysine 343 each participate in a glycyl lysine isopeptide (Lys-Gly) (interchain with G-Cter in SUMO2) cross-link. Phosphoserine is present on serine 436.

The protein is Myb/SANT-like DNA-binding domain-containing protein 2 (Msantd2) of Mus musculus (Mouse).